The chain runs to 857 residues: DNA mismatch repair protein MutS (857 aa).

Residue 608 to 615 (GPNMSGKS) participates in ATP binding.

The protein belongs to the DNA mismatch repair MutS family.

Its function is as follows. This protein is involved in the repair of mismatches in DNA. It is possible that it carries out the mismatch recognition step. This protein has a weak ATPase activity. In Lactobacillus gasseri (strain ATCC 33323 / DSM 20243 / BCRC 14619 / CIP 102991 / JCM 1131 / KCTC 3163 / NCIMB 11718 / NCTC 13722 / AM63), this protein is DNA mismatch repair protein MutS.